Reading from the N-terminus, the 422-residue chain is 5'-deoxyadenosine deaminase (422 aa).

The Zn(2+) site is built by His57 and His59. Substrate contacts are provided by Glu86 and His178. His205 contributes to the Zn(2+) binding site. Residues Glu208 and Asp294 each contribute to the substrate site. Asp294 is a Zn(2+) binding site.

It belongs to the metallo-dependent hydrolases superfamily. MTA/SAH deaminase family. Homotetramer. Zn(2+) is required as a cofactor.

The enzyme catalyses 5'-deoxyadenosine + H2O + H(+) = 5'-deoxyinosine + NH4(+). It catalyses the reaction S-adenosyl-L-homocysteine + H2O + H(+) = S-inosyl-L-homocysteine + NH4(+). It carries out the reaction S-methyl-5'-thioadenosine + H2O + H(+) = S-methyl-5'-thioinosine + NH4(+). The catalysed reaction is adenosine + H2O + H(+) = inosine + NH4(+). It participates in amino-acid biosynthesis; S-adenosyl-L-methionine biosynthesis. Catalyzes the deamination of three SAM-derived enzymatic products, namely 5'-deoxyadenosine, S-adenosyl-L-homocysteine, and 5'-methylthioadenosine, to produce the inosine analogs. Can also deaminate adenosine. The preferred substrate for this enzyme is 5'-deoxyadenosine, but all these substrates are efficiently deaminated. Likely functions in a S-adenosyl-L-methionine (SAM) recycling pathway from S-adenosyl-L-homocysteine (SAH) produced from SAM-dependent methylation reactions. May also be involved in the recycling of 5'-deoxyadenosine, whereupon the 5'-deoxyribose moiety of 5'-deoxyinosine is further metabolized to deoxyhexoses used for the biosynthesis of aromatic amino acids in methanogens. The protein is 5'-deoxyadenosine deaminase of Methanococcus maripaludis (strain C5 / ATCC BAA-1333).